The sequence spans 279 residues: Tryptophan synthase alpha chain (279 aa).

Active-site proton acceptor residues include Glu-50 and Asp-61.

The protein belongs to the TrpA family. In terms of assembly, tetramer of two alpha and two beta chains.

The catalysed reaction is (1S,2R)-1-C-(indol-3-yl)glycerol 3-phosphate + L-serine = D-glyceraldehyde 3-phosphate + L-tryptophan + H2O. The protein operates within amino-acid biosynthesis; L-tryptophan biosynthesis; L-tryptophan from chorismate: step 5/5. In terms of biological role, the alpha subunit is responsible for the aldol cleavage of indoleglycerol phosphate to indole and glyceraldehyde 3-phosphate. The protein is Tryptophan synthase alpha chain of Brucella melitensis biotype 1 (strain ATCC 23456 / CCUG 17765 / NCTC 10094 / 16M).